The following is a 371-amino-acid chain: Putative F-box/kelch-repeat protein At3g10510 (371 aa).

In terms of domain architecture, F-box spans 13-61 (SVMTSIPDDVIMECIAPRVPRYNHSMLSLVSKQFRSLVASPRLYKTRSL). Kelch repeat units follow at residues 123 to 165 (NIFV…DMPV), 178 to 229 (KIYI…GPSS), and 257 to 305 (NECV…YIVS).

This Arabidopsis thaliana (Mouse-ear cress) protein is Putative F-box/kelch-repeat protein At3g10510.